The sequence spans 35 residues: Cupiennin-1a (35 aa).

Residue E35 is modified to Glutamic acid 1-amide.

The protein belongs to the cationic peptide 04 (cupiennin) family. 01 subfamily. Monomer. Interacts with CSTX-1 (AC P81694), CSTX-9 (AC P58604), and CSTX-13 (AC P83919). Expressed by the venom gland.

It localises to the secreted. Functionally, has antimicrobial activity against B.subtilis, E.coli, E.faecalis, P.denitrificans, P.aeruginosa, P.putida, S.aureus, and S.epidermidis. Shows insecticidal and hemolytic activities. Probably acts by disturbing membrane function with its amphipathic structure. Synergistically increases the insecticidal activity of CSTX-1 (AC P81694), CSTX-9 (AC P58604), and CSTX-13 (AC P83919) by up to 65%. Also inhibits the formation of nitric oxide by neuronal nitric oxide synthase. This Cupiennius salei (American wandering spider) protein is Cupiennin-1a.